A 142-amino-acid chain; its full sequence is ATP synthase F(0) complex subunit C3, mitochondrial (142 aa).

A mitochondrion-targeting transit peptide spans 1-67; sequence MFACAKLACT…REFQTSAISR (67 aa). Residues 83–103 form a helical membrane-spanning segment; the sequence is VGVAGSGAGIGTVFGSLIIGY. At Lys110 the chain carries N6,N6,N6-trimethyllysine. Residues 118-138 traverse the membrane as a helical segment; that stretch reads ILGFALSEAMGLFCLMVAFLI.

This sequence belongs to the ATPase C chain family. F-type ATPases have 2 components, CF(1) - the catalytic core - and CF(0) - the membrane proton channel. CF(1) has five subunits: alpha(3), beta(3), gamma(1), delta(1), epsilon(1). CF(0) has three main subunits: a, b and c. Interacts with TMEM70 and TMEM242. Post-translationally, trimethylated by ATPSCKMT at Lys-110. Methylation is required for proper incorporation of the C subunit into the ATP synthase complex and mitochondrial respiration.

The protein resides in the mitochondrion membrane. Functionally, mitochondrial membrane ATP synthase (F(1)F(0) ATP synthase or Complex V) produces ATP from ADP in the presence of a proton gradient across the membrane which is generated by electron transport complexes of the respiratory chain. F-type ATPases consist of two structural domains, F(1) - containing the extramembraneous catalytic core and F(0) - containing the membrane proton channel, linked together by a central stalk and a peripheral stalk. During catalysis, ATP synthesis in the catalytic domain of F(1) is coupled via a rotary mechanism of the central stalk subunits to proton translocation. Part of the complex F(0) domain. A homomeric c-ring of probably 10 subunits is part of the complex rotary element. This Pongo abelii (Sumatran orangutan) protein is ATP synthase F(0) complex subunit C3, mitochondrial.